The following is a 374-amino-acid chain: Chaperone protein DnaJ (374 aa).

One can recognise a J domain in the interval 5–70; sequence DYYEVLGVAR…NKRRMYDSHG (66 aa). The CR-type zinc finger occupies 130-207; it reads GVERRIEIPT…CHGNGRVEED (78 aa). Zn(2+) is bound by residues C143, C146, C159, C162, C181, C184, C195, and C198. 4 CXXCXGXG motif repeats span residues 143-150, 159-166, 181-188, and 195-202; these read CGDCDGSG, CNVCHGRG, CHNCGGRG, and CKTCHGNG.

Belongs to the DnaJ family. In terms of assembly, homodimer. The cofactor is Zn(2+).

The protein localises to the cytoplasm. In terms of biological role, participates actively in the response to hyperosmotic and heat shock by preventing the aggregation of stress-denatured proteins and by disaggregating proteins, also in an autonomous, DnaK-independent fashion. Unfolded proteins bind initially to DnaJ; upon interaction with the DnaJ-bound protein, DnaK hydrolyzes its bound ATP, resulting in the formation of a stable complex. GrpE releases ADP from DnaK; ATP binding to DnaK triggers the release of the substrate protein, thus completing the reaction cycle. Several rounds of ATP-dependent interactions between DnaJ, DnaK and GrpE are required for fully efficient folding. Also involved, together with DnaK and GrpE, in the DNA replication of plasmids through activation of initiation proteins. This is Chaperone protein DnaJ from Stenotrophomonas maltophilia (strain K279a).